We begin with the raw amino-acid sequence, 301 residues long: Cardiolipin synthase (CMP-forming) (301 aa).

Positions 70–93 are disordered; sequence SGAGKAAPRPAAGAGAAAEAPGGQ. A compositionally biased stretch (low complexity) spans 71–93; the sequence is GAGKAAPRPAAGAGAAAEAPGGQ. 5 consecutive transmembrane segments (helical) span residues 109–129, 133–153, 190–212, 250–270, and 272–292; these read IPNM…YLII, FNIA…DGFI, IPVP…VFYV, LILV…SIYL, and ILWC…YHYG.

The protein belongs to the CDP-alcohol phosphatidyltransferase class-I family. The cofactor is a divalent metal cation. Highly expressed in tissues such as heart, skeletal muscle and liver.

The protein localises to the mitochondrion inner membrane. The catalysed reaction is a CDP-1,2-diacyl-sn-glycerol + a 1,2-diacyl-sn-glycero-3-phospho-(1'-sn-glycerol) = a cardiolipin + CMP + H(+). Its function is as follows. Catalyzes the synthesis of cardiolipin (CL) (diphosphatidylglycerol) by specifically transferring a phosphatidyl group from CDP-diacylglycerol to phosphatidylglycerol (PG). CL is a key phospholipid in mitochondrial membranes and plays important roles in maintaining the functional integrity and dynamics of mitochondria under both optimal and stress conditions. The protein is Cardiolipin synthase (CMP-forming) (CRLS1) of Homo sapiens (Human).